The primary structure comprises 394 residues: MTTKNRQIKNFTSNFGPQHPAAHGVSRSVLEMNGEVVERAEPHIGLLQRGTEKLIEYKTYLQALPYSDRSEYVSMMAQEHAHSSAVERLLNCEVPLRAQYIRVLFREITRISNHSLALTTHAMDVGASTPFLWAFEEREKLLEFYERVSGARMHASFIRPGGVAQDLPLGLCIDIDSFTQQFASRIDELEEMSTGNRIWKQRLVDIGTVTAQQAKDWGFSGVMLRGSGVCWDLRKAAPYDVHDQLDPDIPVGTRGDRYDRYCIRIEEMRQSVRIIVQCLNQMPSGMIKADDRKLCPPSRSRMKLSMESSIHHFEPYTEGFSVPAPSTYTAVEAPKGEFGVFLVSNGSNRPYRRKIRAPCFAHSQGLDSMSKHHMPADVVTIIGTQDIVSGEVDR.

Residues 1–16 (MTTKNRQIKNFTSNFG) are compositionally biased toward polar residues. Residues 1-22 (MTTKNRQIKNFTSNFGPQHPAA) are disordered.

It belongs to the complex I 49 kDa subunit family. Complex I is composed of about 45 different subunits. This is a component of the iron-sulfur (IP) fragment of the enzyme.

It is found in the mitochondrion. It carries out the reaction a ubiquinone + NADH + 5 H(+)(in) = a ubiquinol + NAD(+) + 4 H(+)(out). Functionally, core subunit of the mitochondrial membrane respiratory chain NADH dehydrogenase (Complex I) that is believed to belong to the minimal assembly required for catalysis. Complex I functions in the transfer of electrons from NADH to the respiratory chain. The immediate electron acceptor for the enzyme is believed to be ubiquinone. Component of the iron-sulfur (IP) fragment of the enzyme. This Nicotiana sylvestris (Wood tobacco) protein is NADH dehydrogenase [ubiquinone] iron-sulfur protein 2 (NAD7).